A 336-amino-acid chain; its full sequence is MAVIESVGANTTVEAGGLISPSPPSSVTSQESGASSNNDHGGNGIHDEIGVHVARSDGGESFKRDMRELHELLSKLNPMAKEFIPPSLTKPVVNGFNGGFFAVNNGFVAAGNFPVNEDGSFRRKKSFGQQGKRRMNPRTSLAQREEIIRRTVYVSDIDQQVTEEQLAGLFIGFGQVVDCRICGDPNSVLRFAFIEFTDEVGARTALNLSGTMLGFYPVKVMPSKTAIAPVNPTFLPRTEDEREMCARTIYCTNIDKKLTQTDIKLFFESVCGEVYRLRLLGDYHHPTRIGFVEFVMAESAIAALNCSGVLLGSLPIRVSPSKTPVRSRAIPRHQMH.

The interval 14-47 is disordered; the sequence is EAGGLISPSPPSSVTSQESGASSNNDHGGNGIHD. Residues 25–40 are compositionally biased toward polar residues; that stretch reads SSVTSQESGASSNNDH. The PAM2-like signature appears at 75 to 85; it reads KLNPMAKEFIP. Residues 122 to 134 carry the Bipartite nuclear localization signal motif; it reads RRKKSFGQQGKRR. 2 RRM domains span residues 150–225 and 247–323; these read RTVY…PSKT and RTIY…PSKT.

Interacts with MPC. Expressed in roots, leaves, stems, flowers and siliques. Detected in flowers only in growing organs: gynoecium, petals, stamenal filaments, anther walls and ovules.

The protein resides in the nucleus. Its function is as follows. Binds nucleotic acids in vitro. The polypeptide is Polyadenylate-binding protein-interacting protein 12 (CID12) (Arabidopsis thaliana (Mouse-ear cress)).